Reading from the N-terminus, the 257-residue chain is Small ribosomal subunit protein uS2 (257 aa).

The protein belongs to the universal ribosomal protein uS2 family.

The sequence is that of Small ribosomal subunit protein uS2 from Bartonella henselae (strain ATCC 49882 / DSM 28221 / CCUG 30454 / Houston 1) (Rochalimaea henselae).